The chain runs to 196 residues: NADPH:quinone oxidoreductase (196 aa).

This sequence belongs to the SsuE family. Homotetramer. It depends on FMN as a cofactor.

The protein localises to the cell membrane. The enzyme catalyses a quinone + NADH + H(+) = a quinol + NAD(+). It carries out the reaction a quinone + NADPH + H(+) = a quinol + NADP(+). In terms of biological role, the enzyme apparently serves as a quinone reductase in connection with conjugation reactions of hydroquinones involved in detoxification pathways. The chain is NADPH:quinone oxidoreductase (NQR) from Arabidopsis thaliana (Mouse-ear cress).